We begin with the raw amino-acid sequence, 224 residues long: Prothoracicotropic hormone (224 aa).

Positions 1–29 (MITRPIILVILCYAILMIVQSFVPKAVAL) are cleaved as a signal peptide. Intrachain disulfides connect Cys-132–Cys-169, Cys-155–Cys-211, and Cys-163–Cys-213. The N-linked (GlcNAc...) asparagine glycan is linked to Asn-156.

Homodimer; disulfide-linked. As to expression, PTTH is synthesized by two dorsolateral neurosecretory cells of the Bombyx brain.

In terms of biological role, PTTH is a brain secretory polypeptide of insects which stimulates the prothoracic glands to produce and release ecdysone, the steroid essential to insect development. Functionally, peptides P2K and P6K are presumed to be cleaved post-translationally and may play some unknown physiologically or developmentally important functions. The chain is Prothoracicotropic hormone from Bombyx mori (Silk moth).